The chain runs to 280 residues: Undecaprenyl-diphosphatase (280 aa).

Helical transmembrane passes span 19-39 (FLPVSSTGHLFLFSSFFPFSG), 44-64 (FDDLFDIFIQSGAILSVLFLY), 89-109 (FYFLVQIVIGAFPILVVGFIA), 125-145 (ILASAWIFGGVLILIAEWFFQ), 156-176 (VGFRDAILIGIFQCVALIPGV), 197-217 (AEFSFFLAVPVLLAAGIYKLI), 226-246 (VTIPILAFGFLISFLLCTLVI), and 259-279 (GVFGIYRILLGVGVLVFTKFI).

Belongs to the UppP family.

The protein localises to the cell inner membrane. The enzyme catalyses di-trans,octa-cis-undecaprenyl diphosphate + H2O = di-trans,octa-cis-undecaprenyl phosphate + phosphate + H(+). Catalyzes the dephosphorylation of undecaprenyl diphosphate (UPP). Confers resistance to bacitracin. The sequence is that of Undecaprenyl-diphosphatase from Leptospira borgpetersenii serovar Hardjo-bovis (strain L550).